A 177-amino-acid polypeptide reads, in one-letter code: Thaumatin-like protein (177 aa).

The signal sequence occupies residues 1-26 (MASPATSSAVLVVVLVATLAAGGANA).

It belongs to the thaumatin family.

The protein resides in the secreted. The protein is Thaumatin-like protein of Oryza sativa subsp. japonica (Rice).